The sequence spans 89 residues: HssA/B-like protein DDB_G0295685 (89 aa).

It belongs to the hssA/B family.

This Dictyostelium discoideum (Social amoeba) protein is HssA/B-like protein DDB_G0295685.